The primary structure comprises 1021 residues: MSIFSSISSLGLEACYRHHVRTSPNATAVVDGDQSMTYRELETRVNDLASILGRENIEEEEPIGILVPMGIAHVVAQAAVLRLGGSCVPMDLSFPDQRINDLLRALKTRIVLTVESEKARFAEFQTILVDSKYANLHQNGYHEDTIPAVETGRNHRTHILHTSGTTGLPKPVEIMSKGITRMAFNTQCVEFKSTDRVAQISAPSFDAALFEIWTTLARGAAIVLLPKNVVIDPVALHDSLRKYRITSILVTTALLNHVVSAIPNAFEDLDYVLTGGEAANPSVMQVILENGPPKKLVHAYGPTECTIITTYHLTTLEEVRRGQTPIGRPLDNTTVYILDDNLQPVKEGIVGELYIGGDAVARGYLGRPEANAKSFLEVSHLSKDGSPVRIYRSGDLVRMLDTGAIEFVARADNMVKIRGFRIEPAEIEGALLKSEMVQGTVVLPVHRPGKETYIVAFVIPKHDGAFSLEQLDEYLRRRLPAYMMPRLEAVASLPLTVHGKIDRVAVMKKHMEETKRAEQQVLISSNVKDAGDSVTWLRTLWTSVLGISNIDNEASFFHLGGSSLQAAALLVHIRRRFGLTLTMQQIYDSPTLLGLASVIDAGHAKSKVDHSRLGIFIADSQLAKDIPVLSKEAPDWRSPSEGKVFLTGATGFLGTYFLRELIDRPDVRSVKCLVRASDAHSARKRLLGALDKYGLGWADNLDKVTAIAGDLGKDLFGLSETEFHELALWTSVIFHVGAHVNYVQPYEKHRNTNVYGTLNCIKLATTGRTKALHYTSTAAVTGPVSHFTGADKIPEDVDLGEFQGWLPYDIGYTQSKWVSEQLIHSMIAKGLPAIVFRPGFIMGDSLRGKGNCDDFMCRVFIGSIKLGYRPILPNQSKIMIPVDFITTALLHITSNPYNFGRTFHLVPQTPEEDTDIETSWNMLKELGYDLKAVEYKDWLEILSKDKDLLTNPLLPMLPVLQEPVRKHLTRWELYEDMATYDVTNTRRSLADRGKLKSGIGLEDLRRHVEDWVARGLVPSRN.

Positions 17–418 are adenylation (A) domain; it reads RHHVRTSPNA…ARADNMVKIR (402 aa). In terms of domain architecture, Carrier spans 528–603; that stretch reads KDAGDSVTWL…GLASVIDAGH (76 aa). Residue Ser563 is modified to O-(pantetheine 4'-phosphoryl)serine. Residues 646-888 form a short-chain dehydrogenase/reductase (R) domain region; that stretch reads LTGATGFLGT…MIPVDFITTA (243 aa).

It belongs to the NRP synthetase family.

The protein operates within secondary metabolite biosynthesis. Its function is as follows. Nonribosomal peptide synthetase; part of the gene cluster that mediates the biosynthesis of aspergillic acid, a hydroxamic acid-containing pyrazinone with aliphatic side chains that originates from leucine (Leu) and isoleucine (Ile). Aspergillic acid has antibiotic properties and was shown to be lethal to mice. The first step in the pathway is the production of deoxyaspergillic acid via a condensation between the Ile amine and the Leu carboxylic acid, followed by a reductive release from the protein forming the dipeptide aldehyde NH(2)-Leu-Ile-CHO, which could undergo an intermolecular cyclization resulting in a dihydropyrazinone. As the NRPS asaC lacks a condensation domain, it is improbable that it is responsible for condensation of Leu and Ile. One possibility is that asaC acts on a previously condensed dipeptide and functions as a Leu-Ile reductase to yield deoxyaspergillic acid. After asaC forms deoxyaspergillic acid, the cytochrome P450 asaD oxidizes the pyrazinone to the hydroxamic acid-containing bioactive metabolite aspergillic acid. The hydroxylase/desaturase asaB can then convert aspergillic acid to hydroxyaspergillic acid. Both aspergillic acid and hydroxyaspergillic acid can form complexes with iron producing ferriaspergillin analogs. This chain is Nonribosomal peptide synthetase asaC, found in Aspergillus flavus (strain ATCC 200026 / FGSC A1120 / IAM 13836 / NRRL 3357 / JCM 12722 / SRRC 167).